The chain runs to 289 residues: Diaminopimelate epimerase (289 aa).

The substrate site is built by N13, Q52, and N72. Residue C81 is the Proton donor of the active site. Substrate-binding positions include 82 to 83, N167, N201, and 219 to 220; these read GN and ER. C228 serves as the catalytic Proton acceptor. 229–230 contributes to the substrate binding site; sequence GT.

Belongs to the diaminopimelate epimerase family. In terms of assembly, homodimer.

The protein localises to the cytoplasm. It catalyses the reaction (2S,6S)-2,6-diaminopimelate = meso-2,6-diaminopimelate. It participates in amino-acid biosynthesis; L-lysine biosynthesis via DAP pathway; DL-2,6-diaminopimelate from LL-2,6-diaminopimelate: step 1/1. Catalyzes the stereoinversion of LL-2,6-diaminopimelate (L,L-DAP) to meso-diaminopimelate (meso-DAP), a precursor of L-lysine and an essential component of the bacterial peptidoglycan. This is Diaminopimelate epimerase from Caulobacter sp. (strain K31).